The primary structure comprises 504 residues: MFPREKTWNISFAGCGFLGVYYVGVASCLREHAPFLVANATHIYGASAGALTATALVTGVCLGEAGAKFIEVSKEARKRFLGPLHPSFNLVKIIRSFLLKVLPADSHEHASGRLGISLTRVSDGENVIISHFNSKDELIQANVCSGFIPVYCGLIPPSLQGVRYVDGGISDNLPLYELKNTITVSPFSGESDICPQDSSTNIHELRVTNTSIQFNLRNLYRLSKALFPPEPLVLREMCKQGYRDGLRFLQRNGLLNRPNPLLALPPARPHGPEDKDQAVESAQAEDYSQLPGEDHILEHLPARLNEALLEACVEPTDLLTTLSNMLPVRLATAMMVPYTLPLESALSFTIRLLEWLPDVPEDIRWMKEQTGSICQYLVMRAKRKLGRHLPSRLPEQVELRRVQSLPSVPLSCAAYREALPGWMRNNLSLGDALAKWEECQRQLLLGLFCTNVAFPPEALRMRAPADPAPAPADPASPQHQLAGPAPLLSTPAPEARPVIGALGL.

Residues 1-8 (MFPREKTW) are Cytoplasmic-facing. The chain crosses the membrane as a helical span at residues 9–29 (NISFAGCGFLGVYYVGVASCL). One can recognise a PNPLA domain in the interval 10-179 (ISFAGCGFLG…SDNLPLYELK (170 aa)). The GXGXXG signature appears at 14–19 (GCGFLG). Residues 30–42 (REHAPFLVANATH) lie on the Extracellular side of the membrane. Residue N39 is glycosylated (N-linked (GlcNAc...) asparagine). Residues 43–63 (IYGASAGALTATALVTGVCLG) form a helical membrane-spanning segment. The GXSXG motif lies at 45–49 (GASAG). S47 serves as the catalytic Nucleophile. Residues 64–137 (EAGAKFIEVS…IISHFNSKDE (74 aa)) are Cytoplasmic-facing. A Glycyl lysine isopeptide (Lys-Gly) (interchain with G-Cter in ubiquitin) cross-link involves residue K92. The chain crosses the membrane as a helical span at residues 138–158 (LIQANVCSGFIPVYCGLIPPS). The Extracellular portion of the chain corresponds to 159–329 (LQGVRYVDGG…TTLSNMLPVR (171 aa)). D166 functions as the Proton acceptor in the catalytic mechanism. A DGA/G motif is present at residues 166-168 (DGG). The helical transmembrane segment at 330-350 (LATAMMVPYTLPLESALSFTI) threads the bilayer. The Cytoplasmic segment spans residues 351 to 504 (RLLEWLPDVP…ARPVIGALGL (154 aa)). S372 carries the phosphoserine; in vitro modification. Residue S404 is modified to Phosphoserine; by PKA and FAM20C. S428 is subject to Phosphoserine. Residues 463–492 (APADPAPAPADPASPQHQLAGPAPLLSTPA) form a disordered region.

In terms of assembly, interacts with ABHD5; this association stimulates PNPLA2 triglyceride hydrolase activity. Interacts with SERPINF1; this interaction stimulates the phospholipase A2 activity of PNPLA2. Despite a colocalization in lipid droplets, it probably does not interact with PLIN. Interacts with PLIN5; prevents interaction with ABHD5. Interacts with FAF2. Post-translationally, phosphorylation at Ser-404 by PKA is increased during fasting and moderate intensity exercise, and moderately increases lipolytic activity. Phosphorylation at Ser-404 is increased upon beta-adrenergic stimulation. In terms of processing, ubiquitinated by PEX2 in response to reactive oxygen species (ROS), leading to its degradation. Ubiquitination is stimulated by LDAH. Highest expression in adipose tissue. Also detected in heart, skeletal muscle, and portions of the gastrointestinal tract. Detected in normal retina and retinoblastoma cells. Detected in retinal pigment epithelium and, at lower intensity, in the inner segments of photoreceptors and in the ganglion cell layer of the neural retina (at protein level).

The protein localises to the lipid droplet. The protein resides in the cell membrane. It is found in the cytoplasm. It catalyses the reaction a triacylglycerol + H2O = a diacylglycerol + a fatty acid + H(+). The enzyme catalyses a triacylglycerol + H2O = a 1,2-diacylglycerol + a fatty acid + H(+). The catalysed reaction is a triacylglycerol + H2O = a 1,3-diacylglycerol + a fatty acid + H(+). It carries out the reaction a triacyl-sn-glycerol + H2O = a 1,3-diacyl-sn-glycerol + a fatty acid + H(+). It catalyses the reaction a triacyl-sn-glycerol + H2O = a 2,3-diacyl-sn-glycerol + a fatty acid + H(+). The enzyme catalyses a 1-acylglycerol + a 1,3-diacylglycerol = a triacylglycerol + glycerol. The catalysed reaction is a 1-acylglycerol + a 1,2-diacylglycerol = a triacylglycerol + glycerol. It carries out the reaction 2 a 1-acylglycerol = a 1,2-diacylglycerol + glycerol. It catalyses the reaction a triacylglycerol + all-trans-retinol = an all-trans-retinyl ester + a diacylglycerol. The enzyme catalyses 1,2-di-(9Z-octadecenoyl)-glycerol + (9Z)-octadecenoate + H(+) = 1,2,3-tri-(9Z-octadecenoyl)-glycerol + H2O. The catalysed reaction is 1,2,3-tri-(9Z-octadecenoyl)-glycerol + H2O = 1,3-di-(9Z-octadecenoyl)-glycerol + (9Z)-octadecenoate + H(+). It carries out the reaction 1-(9Z-octadecenoyl)-glycerol + 1,3-di-(9Z-octadecenoyl)-glycerol = 1,2,3-tri-(9Z-octadecenoyl)-glycerol + glycerol. It catalyses the reaction 1-(9Z-octadecenoyl)-glycerol + 1,2-di-(9Z-octadecenoyl)-glycerol = 1,2,3-tri-(9Z-octadecenoyl)-glycerol + glycerol. The enzyme catalyses 2 1-(9Z-octadecenoyl)-glycerol = 1,2-di-(9Z-octadecenoyl)-glycerol + glycerol. The catalysed reaction is 1,2,3-tri-(9Z-octadecenoyl)-glycerol + all-trans-retinol = all-trans-retinyl 9Z-octadecenoate + di-(9Z)-octadecenoylglycerol. It carries out the reaction 1,2,3-tri-(9Z)-hexadecenoylglycerol + H2O = 1,3-di-(9Z)-hexadecenoylglycerol + (9Z)-hexadecenoate + H(+). It catalyses the reaction 1,2,3-tri-(9Z,12Z)-octadecadienoylglycerol + H2O = 1,3-di-(9Z,12Z)-octadecadienoylglycerol + (9Z,12Z)-octadecadienoate + H(+). The enzyme catalyses 1,2,3-tri-(9Z,12Z,15Z)-octadecatrienoylglycerol + H2O = 1,3-di-(9Z,12Z,15Z)-octadecatrienoylglycerol + (9Z,12Z,15Z)-octadecatrienoate + H(+). The catalysed reaction is 1,3-di-(9Z)-octadecenoyl-2-hexadecanoylglycerol + H2O = 1,3-di-(9Z-octadecenoyl)-glycerol + hexadecanoate + H(+). It carries out the reaction 1,2-di-(9Z)-octadecenoyl-3-hexadecanoyl-sn-glycerol + H2O = 1-(9Z)-octadecenoyl-3-hexadecanoyl-sn-glycerol + (9Z)-octadecenoate + H(+). It catalyses the reaction 1-hexadecanoyl-2,3-di-(9Z)-octadecenoyl-sn-glycerol + H2O = 1-hexadecanoyl-3-(9Z)-octadecenoyl-sn-glycerol + (9Z)-octadecenoate + H(+). The enzyme catalyses 1,2,3-tri-(9Z-octadecenoyl)-glycerol + H2O = 2,3-di-(9Z)-octadecenoyl-sn-glycerol + (9Z)-octadecenoate + H(+). The catalysed reaction is 1,2,3-tri-(9Z)-hexadecenoylglycerol + H2O = 2,3-di-(9Z)-hexadecenoyl-sn-glycerol + (9Z)-hexadecenoate + H(+). It carries out the reaction 1,2,3-tri-(9Z,12Z)-octadecadienoylglycerol + H2O = 2,3-di-(9Z,12Z)-octadecadienoyl-sn-glycerol + (9Z,12Z)-octadecadienoate + H(+). It catalyses the reaction 1,2,3-tri-(9Z,12Z,15Z)-octadecatrienoylglycerol + H2O = 2,3-di-(9Z,12Z,15Z)-octadecatrienoyl-sn-glycerol + (9Z,12Z,15Z)-octadecatrienoate + H(+). The enzyme catalyses 1,3-di-(9Z)-octadecenoyl-2-hexadecanoylglycerol + H2O = 2-hexadecanoyl-3-(9Z)-octadecenoyl-sn-glycerol + (9Z)-octadecenoate + H(+). The catalysed reaction is 1-hexadecanoyl-2,3-di-(9Z)-octadecenoyl-sn-glycerol + H2O = 2,3-di-(9Z)-octadecenoyl-sn-glycerol + hexadecanoate + H(+). It carries out the reaction 1,2-di-(9Z)-octadecenoyl-3-hexadecanoyl-sn-glycerol + H2O = 2-(9Z-octadecenoyl)-3-hexadecanoyl-sn-glycerol + (9Z)-octadecenoate + H(+). It catalyses the reaction a 1,2-diacyl-sn-glycero-3-phosphocholine + H2O = a 1-acyl-sn-glycero-3-phosphocholine + a fatty acid + H(+). The enzyme catalyses 1,2,3-tri-(9Z-octadecenoyl)-glycerol + 9-hydroxy-octadecanoate = 9-(9Z-octadecenoyloxy)-octadecanoate + 2,3-di-(9Z)-octadecenoyl-sn-glycerol. The catalysed reaction is 1-hexadecanoyl-2,3-di-(9Z)-octadecenoyl-sn-glycerol + 9-hydroxy-octadecanoate = 9-hexadecanoyloxy-octadecanoate + 2,3-di-(9Z)-octadecenoyl-sn-glycerol. It carries out the reaction 1,2,3-tri-(10Z)-heptadecenoylglycerol + 9-hydroxy-octadecanoate = 2,3-di-(10Z-heptadecenoyl)-sn-glycerol + 9-(10Z-heptadecenoyloxy)-octadecanoate. It catalyses the reaction 1,2,3-tri-(9Z,12Z)-octadecadienoylglycerol + 9-hydroxy-octadecanoate = 2,3-di-(9Z,12Z)-octadecadienoyl-sn-glycerol + 9-(9Z,12Z-octadecadienoyloxy)-octadecanoate. The enzyme catalyses 1,2,3-tri-(9Z)-hexadecenoylglycerol + 9-hydroxy-octadecanoate = 2,3-di-(9Z)-hexadecenoyl-sn-glycerol + 9-(9Z-hexadecenoyloxy)-octadecanoate. The catalysed reaction is 9-hydroxy-octadecanoate + 1,2-di-(9Z-octadecenoyl)-sn-glycerol = 9-(9Z-octadecenoyloxy)-octadecanoate + 2-(9Z-octadecenoyl)-glycerol. It carries out the reaction 1-hexadecanoyl-2,3-di-(9Z)-octadecenoyl-sn-glycerol + 9-hydroxy-octadecanoate = 1-hexadecanoyl-3-(9Z)-octadecenoyl-sn-glycerol + 9-(9Z-octadecenoyloxy)-octadecanoate. It functions in the pathway glycerolipid metabolism; triacylglycerol degradation. Its activity is regulated as follows. The triglyceride lipase activity is inhibited by BEL ((E)-6-(bromomethylene)-3-(1-naphthalenyl)-2H-tetrahydropyran-2-one), a suicide substrate inhibitor. No differences in the acylglycerol transacylase was detected in the presence or absence of ATP. Functionally, catalyzes the initial step in triglyceride hydrolysis in adipocyte and non-adipocyte lipid droplets. Exhibits a strong preference for the hydrolysis of long-chain fatty acid esters at the sn-2 position of the glycerol backbone and acts coordinately with LIPE/HLS and DGAT2 within the lipolytic cascade. Also possesses acylglycerol transacylase and phospholipase A2 activities. Transfers fatty acid from triglyceride to retinol, hydrolyzes retinylesters, and generates 1,3-diacylglycerol from triglycerides. Regulates adiposome size and may be involved in the degradation of adiposomes. Catalyzes the formation of an ester bond between hydroxy fatty acids and fatty acids derived from triglycerides or diglycerides to generate fatty acid esters of hydroxy fatty acids (FAHFAs) in adipocytes. Acts antagonistically with LDAH in regulation of cellular lipid stores. Inhibits LDAH-stimulated lipid droplet fusion. May play an important role in energy homeostasis. May play a role in the response of the organism to starvation, enhancing hydrolysis of triglycerides and providing free fatty acids to other tissues to be oxidized in situations of energy depletion. The polypeptide is Patatin-like phospholipase domain-containing protein 2 (Homo sapiens (Human)).